Consider the following 429-residue polypeptide: Serine hydroxymethyltransferase (429 aa).

(6S)-5,6,7,8-tetrahydrofolate contacts are provided by residues leucine 126 and 130 to 132 (GHL). The residue at position 235 (lysine 235) is an N6-(pyridoxal phosphate)lysine. A (6S)-5,6,7,8-tetrahydrofolate-binding site is contributed by 359–361 (SPF).

This sequence belongs to the SHMT family. Homodimer. It depends on pyridoxal 5'-phosphate as a cofactor.

The protein localises to the cytoplasm. It catalyses the reaction (6R)-5,10-methylene-5,6,7,8-tetrahydrofolate + glycine + H2O = (6S)-5,6,7,8-tetrahydrofolate + L-serine. Its pathway is one-carbon metabolism; tetrahydrofolate interconversion. It participates in amino-acid biosynthesis; glycine biosynthesis; glycine from L-serine: step 1/1. Its function is as follows. Catalyzes the reversible interconversion of serine and glycine with tetrahydrofolate (THF) serving as the one-carbon carrier. This reaction serves as the major source of one-carbon groups required for the biosynthesis of purines, thymidylate, methionine, and other important biomolecules. Also exhibits THF-independent aldolase activity toward beta-hydroxyamino acids, producing glycine and aldehydes, via a retro-aldol mechanism. In Synechococcus sp. (strain CC9902), this protein is Serine hydroxymethyltransferase.